The primary structure comprises 305 residues: MKSDSSTSAAPLRGLGGPLRSSEPVRAVPARAPAVDLLEEAADLLVVHLDFRAALETCERAWQSLANHAVAEEPAGTSLEVKCSLCVVGIQALAEMDRWQEVLSWVLQYYQVPEKLPPKVLELCILLYSKMQEPGAVLDVVGAWLQDPANQNLPEYGALAEFHVQRVLLPLGCLSEAEELVVGSAAFGEERRLDVLQAIHTARQQQKQEHSGSEEAQKPNLEGSVSHKFLSLPMLVRQLWDSAVSHFFSLPFKKSLLAALILCLLVVRFDPASPSSLHFLYKLAQLFRWIRKAAFSRLYQLRIRD.

Positions 1–20 (MKSDSSTSAAPLRGLGGPLR) are disordered. At 1-246 (MKSDSSTSAA…RQLWDSAVSH (246 aa)) the chain is on the cytoplasmic side. A helical; Signal-anchor for type II membrane protein membrane pass occupies residues 247 to 267 (FFSLPFKKSLLAALILCLLVV). The Peroxisomal matrix portion of the chain corresponds to 268-305 (RFDPASPSSLHFLYKLAQLFRWIRKAAFSRLYQLRIRD).

It belongs to the peroxin-26 family. As to quaternary structure, interacts (via its cytoplasmic domain) with PEX6; interaction is direct and is ATP-dependent. Interacts with PEX1; interaction is indirect and is mediated via interaction with PEX6. Widely expressed. Highly expressed in kidney, liver, brain and skeletal muscles. Expressed at intermediate level in pancreas, placenta and heart. Weakly expressed in lung.

The protein resides in the peroxisome membrane. Peroxisomal docking factor that anchors PEX1 and PEX6 to peroxisome membranes. PEX26 is therefore required for the formation of the PEX1-PEX6 AAA ATPase complex, a complex that mediates the extraction of the PEX5 receptor from peroxisomal membrane. The chain is Peroxisome assembly protein 26 from Homo sapiens (Human).